Consider the following 31-residue polypeptide: Conotoxin (31 aa).

Belongs to the conotoxin S superfamily. In terms of processing, contains 5 disulfide bonds. Expressed by the venom duct.

The protein resides in the secreted. The polypeptide is Conotoxin (Conus striatus (Striated cone)).